The following is a 56-amino-acid chain: uncharacterized protein (56 aa).

This is an uncharacterized protein from Treponema pallidum (strain Nichols).